Here is a 614-residue protein sequence, read N- to C-terminus: 1-deoxy-D-xylulose-5-phosphate synthase (614 aa).

Thiamine diphosphate contacts are provided by residues H76 and 117–119 (GHS). Residue D148 participates in Mg(2+) binding. Residues 149-150 (GA), N177, Y285, and E366 each bind thiamine diphosphate. N177 provides a ligand contact to Mg(2+).

Belongs to the transketolase family. DXPS subfamily. In terms of assembly, homodimer. Mg(2+) is required as a cofactor. It depends on thiamine diphosphate as a cofactor.

The enzyme catalyses D-glyceraldehyde 3-phosphate + pyruvate + H(+) = 1-deoxy-D-xylulose 5-phosphate + CO2. It participates in metabolic intermediate biosynthesis; 1-deoxy-D-xylulose 5-phosphate biosynthesis; 1-deoxy-D-xylulose 5-phosphate from D-glyceraldehyde 3-phosphate and pyruvate: step 1/1. Catalyzes the acyloin condensation reaction between C atoms 2 and 3 of pyruvate and glyceraldehyde 3-phosphate to yield 1-deoxy-D-xylulose-5-phosphate (DXP). The sequence is that of 1-deoxy-D-xylulose-5-phosphate synthase from Pasteurella multocida (strain Pm70).